The primary structure comprises 310 residues: ADP-L-glycero-D-manno-heptose-6-epimerase (310 aa).

Residues 10–11 (LI), 31–32 (DN), Lys-38, Lys-53, 75–79 (EGACS), and Asn-92 contribute to the NADP(+) site. Tyr-140 functions as the Proton acceptor in the catalytic mechanism. Residue Lys-144 participates in NADP(+) binding. Residue Asn-169 participates in substrate binding. Positions 170 and 178 each coordinate NADP(+). Lys-178 functions as the Proton acceptor in the catalytic mechanism. Residues Ser-180, His-187, 201–204 (FAGS), Arg-209, and Tyr-272 each bind substrate.

The protein belongs to the NAD(P)-dependent epimerase/dehydratase family. HldD subfamily. In terms of assembly, homopentamer. NADP(+) is required as a cofactor.

The enzyme catalyses ADP-D-glycero-beta-D-manno-heptose = ADP-L-glycero-beta-D-manno-heptose. It participates in nucleotide-sugar biosynthesis; ADP-L-glycero-beta-D-manno-heptose biosynthesis; ADP-L-glycero-beta-D-manno-heptose from D-glycero-beta-D-manno-heptose 7-phosphate: step 4/4. Functionally, catalyzes the interconversion between ADP-D-glycero-beta-D-manno-heptose and ADP-L-glycero-beta-D-manno-heptose via an epimerization at carbon 6 of the heptose. In Erwinia tasmaniensis (strain DSM 17950 / CFBP 7177 / CIP 109463 / NCPPB 4357 / Et1/99), this protein is ADP-L-glycero-D-manno-heptose-6-epimerase.